The following is a 468-amino-acid chain: Adenosylhomocysteinase (468 aa).

Substrate is bound by residues Thr-63, Asp-139, and Glu-164. Residue 165-167 coordinates NAD(+); it reads TTT. Positions 194 and 198 each coordinate substrate. Residues Asn-199, 228-233, Glu-251, Asn-300, 321-323, and Asn-374 contribute to the NAD(+) site; these read GYGDVG and IGH.

This sequence belongs to the adenosylhomocysteinase family. The cofactor is NAD(+).

Its subcellular location is the cytoplasm. It carries out the reaction S-adenosyl-L-homocysteine + H2O = L-homocysteine + adenosine. It functions in the pathway amino-acid biosynthesis; L-homocysteine biosynthesis; L-homocysteine from S-adenosyl-L-homocysteine: step 1/1. May play a key role in the regulation of the intracellular concentration of adenosylhomocysteine. This Stutzerimonas stutzeri (strain A1501) (Pseudomonas stutzeri) protein is Adenosylhomocysteinase.